Here is a 296-residue protein sequence, read N- to C-terminus: 33 kDa chaperonin (296 aa).

2 cysteine pairs are disulfide-bonded: C237–C239 and C270–C273.

This sequence belongs to the HSP33 family. In terms of processing, under oxidizing conditions two disulfide bonds are formed involving the reactive cysteines. Under reducing conditions zinc is bound to the reactive cysteines and the protein is inactive.

Its subcellular location is the cytoplasm. In terms of biological role, redox regulated molecular chaperone. Protects both thermally unfolding and oxidatively damaged proteins from irreversible aggregation. Plays an important role in the bacterial defense system toward oxidative stress. The protein is 33 kDa chaperonin of Acetivibrio thermocellus (strain ATCC 27405 / DSM 1237 / JCM 9322 / NBRC 103400 / NCIMB 10682 / NRRL B-4536 / VPI 7372) (Clostridium thermocellum).